The primary structure comprises 434 residues: MKLIEAIDNNNLKEVIRIIRSDNINLESINDEDDLSPLHHAVSRGYKEIVISMLEHGADVNLCNDEVCSPLHIAIKNDNVEMVQLLIDNGADTDCCNNTIHGTPLQCAILNENYRITDALLESGADTHEIYTKNHPIIEAIKLDNLPLVRLLLRHGADVNTFDPLYGYPIHLAIRYGNIDIIKELLYHGVIESYSLYPSLLHQSIMCNNKEVVLLLISMGFDVNAKDNEGNTPMHLAVQKNLVGIVKILLDKGADTSIINNLSVTCLRSCYVYGNNSTEILQLLISRIVINKYANIPCRSIAGMNYNWSLIESNQKTNSYKLECEKEILKMLDVKIGSRSLFDIYLNKIESNMLLRLYNKVTLPEFIIYKDIIINAVYTAKERESLISKSFTVLEDTISNDTIDNLWKNIPIEVKYMILRYLGKDDLYNIVNSV.

7 ANK repeats span residues 33–62 (DDLSPLHHAVSRGYKEIVISMLEHGADVNL), 66–95 (EVCSPLHIAIKNDNVEMVQLLIDNGADTDC), 101–131 (HGTPLQCAILNENYRITDALLESGADTHEIY), 132–161 (TKNHPIIEAIKLDNLPLVRLLLRHGADVNT), 165–195 (LYGYPIHLAIRYGNIDIIKELLYHGVIESYS), 196–225 (LYPSLLHQSIMCNNKEVVLLLISMGFDVNA), and 229–258 (EGNTPMHLAVQKNLVGIVKILLDKGADTSI).

The sequence is that of Putative ankyrin repeat protein FPV219 from Fowlpox virus (strain NVSL) (FPV).